A 350-amino-acid chain; its full sequence is Ketol-acid reductoisomerase (NADP(+)) (350 aa).

The KARI N-terminal Rossmann domain occupies 4–187 (VSITTDYSRM…GGARANIIKT (184 aa)). Residues 30–33 (YGSQ), Arg-53, Thr-58, and 88–91 (DMVQ) contribute to the NADP(+) site. The active site involves His-113. Gly-139 contacts NADP(+). Residues 188-333 (TFKEETETDL…KQLRAKMVWL (146 aa)) form the KARI C-terminal knotted domain. Mg(2+) contacts are provided by Asp-196, Glu-200, Glu-232, and Glu-236. Ser-257 provides a ligand contact to substrate.

It belongs to the ketol-acid reductoisomerase family. Mg(2+) serves as cofactor.

The enzyme catalyses (2R)-2,3-dihydroxy-3-methylbutanoate + NADP(+) = (2S)-2-acetolactate + NADPH + H(+). It carries out the reaction (2R,3R)-2,3-dihydroxy-3-methylpentanoate + NADP(+) = (S)-2-ethyl-2-hydroxy-3-oxobutanoate + NADPH + H(+). The protein operates within amino-acid biosynthesis; L-isoleucine biosynthesis; L-isoleucine from 2-oxobutanoate: step 2/4. It functions in the pathway amino-acid biosynthesis; L-valine biosynthesis; L-valine from pyruvate: step 2/4. In terms of biological role, involved in the biosynthesis of branched-chain amino acids (BCAA). Catalyzes an alkyl-migration followed by a ketol-acid reduction of (S)-2-acetolactate (S2AL) to yield (R)-2,3-dihydroxy-isovalerate. In the isomerase reaction, S2AL is rearranged via a Mg-dependent methyl migration to produce 3-hydroxy-3-methyl-2-ketobutyrate (HMKB). In the reductase reaction, this 2-ketoacid undergoes a metal-dependent reduction by NADPH to yield (R)-2,3-dihydroxy-isovalerate. The sequence is that of Ketol-acid reductoisomerase (NADP(+)) from Xylella fastidiosa (strain Temecula1 / ATCC 700964).